A 125-amino-acid polypeptide reads, in one-letter code: Glycine cleavage system H protein (125 aa).

Residues 22–104 (VATVGITIHA…EGEGWLFKLK (83 aa)) enclose the Lipoyl-binding domain. Lys-63 carries the N6-lipoyllysine modification.

This sequence belongs to the GcvH family. The glycine cleavage system is composed of four proteins: P, T, L and H. It depends on (R)-lipoate as a cofactor.

Functionally, the glycine cleavage system catalyzes the degradation of glycine. The H protein shuttles the methylamine group of glycine from the P protein to the T protein. The sequence is that of Glycine cleavage system H protein from Brucella abortus (strain 2308).